The sequence spans 234 residues: uncharacterized protein (234 aa).

The segment at 1-23 (MVDQIRSPSWKSGFPSHQHQQGS) is disordered.

This is an uncharacterized protein from Caenorhabditis elegans.